Here is an 84-residue protein sequence, read N- to C-terminus: MHGTCLSGLYPVPFTHNAHHYPHFDIYISFGGPKYCITALNTYVIPLLHHILTTPFIYTYVNITEKSPQKSPKHKNILLFNNNT.

It belongs to the UPF0320 family.

The polypeptide is Putative UPF0320 protein YAL068W-A (Saccharomyces cerevisiae (strain ATCC 204508 / S288c) (Baker's yeast)).